Consider the following 129-residue polypeptide: V-type proton ATPase subunit F 2 (129 aa).

This sequence belongs to the V-ATPase F subunit family. V-ATPase is a heteromultimeric enzyme made up of two complexes: the ATP-hydrolytic V1 complex and the proton translocation V0 complex. The V1 complex consists of three catalytic AB heterodimers that form a heterohexamer, three peripheral stalks each consisting of EG heterodimers, one central rotor including subunits D and F, and the regulatory subunits C and H. The proton translocation complex V0 consists of the proton transport subunit a, a ring of proteolipid subunits c9c'', rotary subunit d, subunits e and f, and the accessory subunits VhaAC45 and ATP6AP2.

Subunit of the V1 complex of vacuolar(H+)-ATPase (V-ATPase), a multisubunit enzyme composed of a peripheral complex (V1) that hydrolyzes ATP and a membrane integral complex (V0) that translocates protons. V-ATPase is responsible for acidifying and maintaining the pH of intracellular compartments and in some cell types, is targeted to the plasma membrane, where it is responsible for acidifying the extracellular environment. In Drosophila melanogaster (Fruit fly), this protein is V-type proton ATPase subunit F 2 (Vha14-2).